The following is a 237-amino-acid chain: tRNA (guanine-N(7)-)-methyltransferase (237 aa).

4 residues coordinate S-adenosyl-L-methionine: Asp-35, Glu-60, Asn-87, and Asp-113. Asp-113 is a catalytic residue. The substrate site is built by Lys-117 and Asp-149.

The protein belongs to the class I-like SAM-binding methyltransferase superfamily. TrmB family.

It catalyses the reaction guanosine(46) in tRNA + S-adenosyl-L-methionine = N(7)-methylguanosine(46) in tRNA + S-adenosyl-L-homocysteine. Its pathway is tRNA modification; N(7)-methylguanine-tRNA biosynthesis. Its function is as follows. Catalyzes the formation of N(7)-methylguanine at position 46 (m7G46) in tRNA. This is tRNA (guanine-N(7)-)-methyltransferase from Synechococcus sp. (strain CC9311).